A 559-amino-acid polypeptide reads, in one-letter code: Vacuolar protein 8 (559 aa).

Gly-2 carries N-myristoyl glycine lipidation. Residue Cys-4 is the site of S-palmitoyl cysteine attachment. ARM repeat units lie at residues 77–116, 118–157, 159–198, 200–239, 243–282, 284–323, 325–365, and 409–448; these read TERD…NLAV, TENK…NLAT, EENK…NMTH, DENR…NIAV, NRRK…NLAS, EKYQ…NISI, PMNE…NLAA, and DDLK…NLSS.

It belongs to the beta-catenin family.

The protein localises to the vacuole membrane. Functionally, functions in both vacuole inheritance and protein targeting from the cytoplasm to vacuole. This chain is Vacuolar protein 8 (VAC8), found in Gibberella zeae (strain ATCC MYA-4620 / CBS 123657 / FGSC 9075 / NRRL 31084 / PH-1) (Wheat head blight fungus).